Here is a 349-residue protein sequence, read N- to C-terminus: MKEVGIVGYGSDLPKYRIKAEDIAGAWGKDAQAIKRGLVVNEKSVPGPDEDTATISVQAARRALSRAGINPKDIGAVYVGSESHPYAVKPTSGIVAEACGVSPDFTAADLEFACKAGTAGIQMCMGLVGSDMMEYAMAVGADTAQGAPGDALEYTAAAGGAAYIIGAKKEELIAKFNGTYSYTTDTPDFWRREHEHYPKHGGRFTGEPAYFKHVLNGAKGMMAKMDTTAKDYDYCVFHQPNGKFYISAAKQLGFTEEQYKYGLLTPYLGNTYSGAVPLGLSNILDHAKADDRIFVVSYGSGAGSDAFDITVTDRISEVVDKAITTEKLLESKKYVDYAVYLKYRGKIRM.

2 residues coordinate (3S)-3-hydroxy-3-methylglutaryl-CoA: D30 and A31. The active-site Proton donor/acceptor is the E82. (3S)-3-hydroxy-3-methylglutaryl-CoA contacts are provided by C114 and T155. The active-site Acyl-thioester intermediate is C114. Residue R203 participates in CoA binding. (3S)-3-hydroxy-3-methylglutaryl-CoA contacts are provided by T205 and H238. H238 functions as the Proton donor/acceptor in the catalytic mechanism. K243 contributes to the CoA binding site. Residues N270 and S300 each coordinate (3S)-3-hydroxy-3-methylglutaryl-CoA.

The protein belongs to the thiolase-like superfamily. Archaeal HMG-CoA synthase family. Interacts with acetoacetyl-CoA thiolase that catalyzes the precedent step in the pathway and with a DUF35 protein. The acetoacetyl-CoA thiolase/HMG-CoA synthase complex channels the intermediate via a fused CoA-binding site, which allows for efficient coupling of the endergonic thiolase reaction with the exergonic HMGCS reaction.

It carries out the reaction acetoacetyl-CoA + acetyl-CoA + H2O = (3S)-3-hydroxy-3-methylglutaryl-CoA + CoA + H(+). The protein operates within metabolic intermediate biosynthesis; (R)-mevalonate biosynthesis; (R)-mevalonate from acetyl-CoA: step 2/3. Its function is as follows. Catalyzes the condensation of acetyl-CoA with acetoacetyl-CoA to form 3-hydroxy-3-methylglutaryl-CoA (HMG-CoA). Functions in the mevalonate (MVA) pathway leading to isopentenyl diphosphate (IPP), a key precursor for the biosynthesis of isoprenoid compounds that are building blocks of archaeal membrane lipids. In Methanococcus maripaludis (strain C7 / ATCC BAA-1331), this protein is Hydroxymethylglutaryl-CoA synthase.